Consider the following 273-residue polypeptide: Epithelial sodium channel subunit beta (273 aa).

The Extracellular portion of the chain corresponds to 1-245 (NCYIFNWGQE…RSISESPTTN (245 aa)). 5 disulfide bridges follow: C92-C179, C117-C175, C121-C171, C130-C157, and C132-C146. A helical membrane pass occupies residues 246–273 (VVWLLSNLGGQFGFWMGGSVLCIIEFGE).

The protein belongs to the amiloride-sensitive sodium channel (TC 1.A.6) family. SCNN1B subfamily. Component of the heterotrimeric epithelial sodium channel (ENaC) composed of an alpha/SCNN1A, a beta/SCNN1B and a gamma/SCNN1G subunit.

Its subcellular location is the apical cell membrane. It is found in the cytoplasmic vesicle membrane. It carries out the reaction Na(+)(in) = Na(+)(out). Originally identified and characterized by its inhibition by the diuretic drug amiloride. Functionally, this is one of the three pore-forming subunits of the heterotrimeric epithelial sodium channel (ENaC), a critical regulator of sodium balance and fluid homeostasis. ENaC operates in epithelial tissues, where it mediates the electrodiffusion of sodium ions from extracellular fluid through the apical membrane of cells, with water following osmotically. It plays a key role in maintaining sodium homeostasis through electrogenic sodium reabsorption in the kidneys. Additionally, ENaC is essential for airway surface liquid homeostasis, which is crucial for proper mucus clearance. The sequence is that of Epithelial sodium channel subunit beta from Aquarana catesbeiana (American bullfrog).